The chain runs to 376 residues: Alpha-2,8-sialyltransferase 8E (376 aa).

A helical membrane pass occupies residues T17 to Y37. N-linked (GlcNAc...) asparagine glycosylation occurs at N56. Disulfide bonds link C164-C313 and C178-C373. Substrate-binding positions include N192 and N214–S216. N241 carries an N-linked (GlcNAc...) asparagine glycan. S300–G302 is a substrate binding site. H348 acts as the Proton donor/acceptor in catalysis.

The protein belongs to the glycosyltransferase 29 family. As to expression, expressed in liver.

Its subcellular location is the golgi apparatus membrane. It catalyses the reaction a ganglioside GT1b (d18:1(4E)) + CMP-N-acetyl-beta-neuraminate = a ganglioside GQ1b (d18:1(4E)) + CMP + H(+). The enzyme catalyses a ganglioside GQ1c (d18:1(4E)) + CMP-N-acetyl-beta-neuraminate = a ganglioside GP1c (d18:1(4E)) + CMP + H(+). It carries out the reaction a ganglioside GD3 (d18:1(4E)) + CMP-N-acetyl-beta-neuraminate = a ganglioside GT3 (d18:1(4E)) + CMP + H(+). The catalysed reaction is a ganglioside GD1a (d18:1(4E)) + CMP-N-acetyl-beta-neuraminate = a ganglioside GT1a (d18:1(4E)) + CMP + H(+). It catalyses the reaction a ganglioside GM1b (d18:1(4E)) + CMP-N-acetyl-beta-neuraminate = a ganglioside GD1c (d18:1(4E)) + CMP + H(+). Its pathway is protein modification; protein glycosylation. In terms of biological role, involved in the synthesis of gangliosides GD1c, GT1a, GQ1b, GP1c and GT3 from GD1a, GT1b, GM1b and GD3 respectively. The polypeptide is Alpha-2,8-sialyltransferase 8E (Rattus norvegicus (Rat)).